A 554-amino-acid polypeptide reads, in one-letter code: Glucose-6-phosphate isomerase (554 aa).

The active-site Proton donor is the E359. Active-site residues include H390 and K518.

The protein belongs to the GPI family.

Its subcellular location is the cytoplasm. It carries out the reaction alpha-D-glucose 6-phosphate = beta-D-fructose 6-phosphate. It functions in the pathway carbohydrate biosynthesis; gluconeogenesis. It participates in carbohydrate degradation; glycolysis; D-glyceraldehyde 3-phosphate and glycerone phosphate from D-glucose: step 2/4. Its function is as follows. Catalyzes the reversible isomerization of glucose-6-phosphate to fructose-6-phosphate. The polypeptide is Glucose-6-phosphate isomerase (Pseudomonas fluorescens (strain Pf0-1)).